Here is a 564-residue protein sequence, read N- to C-terminus: Pumilio homolog 9 (564 aa).

Residues 222-564 (LEDTVLIGQG…KIFSKTILKK (343 aa)) form the PUM-HD domain. Pumilio repeat units lie at residues 249-284 (EIYG…VILL), 285-320 (AIID…LIVS), 321-359 (VLTS…ALVK), 361-396 (GLKP…FVLE), 397-432 (AATK…RLVA), 433-469 (EISR…VQFR), 470-501 (MHYA…EIVR), and 502-539 (ELLC…KLVA).

It is found in the cytoplasm. Its function is as follows. Sequence-specific RNA-binding protein that regulates translation and mRNA stability by binding the 3'-UTR of target mRNAs. This Arabidopsis thaliana (Mouse-ear cress) protein is Pumilio homolog 9 (APUM9).